The following is a 276-amino-acid chain: Large ribosomal subunit protein uL2c (276 aa).

A disordered region spans residues 221–276 (RGSVMNPVDHPHGGGEGRAPIGRSRPVTPWGKPALGQKTRKPKKQSNKLILRKRKK). Basic residues predominate over residues 258-276 (KTRKPKKQSNKLILRKRKK).

It belongs to the universal ribosomal protein uL2 family. As to quaternary structure, part of the 50S ribosomal subunit.

The protein localises to the plastid. It is found in the chloroplast. This chain is Large ribosomal subunit protein uL2c (rpl2), found in Stigeoclonium helveticum (Green alga).